The primary structure comprises 80 residues: Exodeoxyribonuclease 7 small subunit (80 aa).

The protein belongs to the XseB family. In terms of assembly, heterooligomer composed of large and small subunits.

It is found in the cytoplasm. It carries out the reaction Exonucleolytic cleavage in either 5'- to 3'- or 3'- to 5'-direction to yield nucleoside 5'-phosphates.. Its function is as follows. Bidirectionally degrades single-stranded DNA into large acid-insoluble oligonucleotides, which are then degraded further into small acid-soluble oligonucleotides. This Erwinia tasmaniensis (strain DSM 17950 / CFBP 7177 / CIP 109463 / NCPPB 4357 / Et1/99) protein is Exodeoxyribonuclease 7 small subunit.